The primary structure comprises 320 residues: Acetyl-coenzyme A carboxylase carboxyl transferase subunit alpha (320 aa).

A CoA carboxyltransferase C-terminal domain is found at 42–295 (IGDKAAQALK…GDAIAEAFND (254 aa)).

The protein belongs to the AccA family. Acetyl-CoA carboxylase is a heterohexamer composed of biotin carboxyl carrier protein (AccB), biotin carboxylase (AccC) and two subunits each of ACCase subunit alpha (AccA) and ACCase subunit beta (AccD).

Its subcellular location is the cytoplasm. It catalyses the reaction N(6)-carboxybiotinyl-L-lysyl-[protein] + acetyl-CoA = N(6)-biotinyl-L-lysyl-[protein] + malonyl-CoA. Its pathway is lipid metabolism; malonyl-CoA biosynthesis; malonyl-CoA from acetyl-CoA: step 1/1. Its function is as follows. Component of the acetyl coenzyme A carboxylase (ACC) complex. First, biotin carboxylase catalyzes the carboxylation of biotin on its carrier protein (BCCP) and then the CO(2) group is transferred by the carboxyltransferase to acetyl-CoA to form malonyl-CoA. In Nitrobacter hamburgensis (strain DSM 10229 / NCIMB 13809 / X14), this protein is Acetyl-coenzyme A carboxylase carboxyl transferase subunit alpha.